Consider the following 290-residue polypeptide: Light-independent protochlorophyllide reductase iron-sulfur ATP-binding protein (290 aa).

ATP contacts are provided by residues 10–15 (GIGKST) and lysine 39. Serine 14 is a binding site for Mg(2+). 2 residues coordinate [4Fe-4S] cluster: cysteine 95 and cysteine 129. 180–181 (NR) is an ATP binding site.

It belongs to the NifH/BchL/ChlL family. In terms of assembly, homodimer. Protochlorophyllide reductase is composed of three subunits; ChlL, ChlN and ChlB. It depends on [4Fe-4S] cluster as a cofactor.

It is found in the plastid. Its subcellular location is the chloroplast. The enzyme catalyses chlorophyllide a + oxidized 2[4Fe-4S]-[ferredoxin] + 2 ADP + 2 phosphate = protochlorophyllide a + reduced 2[4Fe-4S]-[ferredoxin] + 2 ATP + 2 H2O. The protein operates within porphyrin-containing compound metabolism; chlorophyll biosynthesis (light-independent). Component of the dark-operative protochlorophyllide reductase (DPOR) that uses Mg-ATP and reduced ferredoxin to reduce ring D of protochlorophyllide (Pchlide) to form chlorophyllide a (Chlide). This reaction is light-independent. The L component serves as a unique electron donor to the NB-component of the complex, and binds Mg-ATP. The polypeptide is Light-independent protochlorophyllide reductase iron-sulfur ATP-binding protein (Zygnema circumcarinatum (Green alga)).